The chain runs to 441 residues: Cysteine--tRNA ligase (441 aa).

Cys24 contacts Zn(2+). The short motif at 26–36 (PTIYDYIHIGN) is the 'HIGH' region element. Zn(2+) contacts are provided by Cys204, His230, and Glu234. Positions 262–266 (KMSKS) match the 'KMSKS' region motif. Residue Lys265 coordinates ATP.

Belongs to the class-I aminoacyl-tRNA synthetase family. In terms of assembly, monomer. Zn(2+) is required as a cofactor.

The protein resides in the cytoplasm. The catalysed reaction is tRNA(Cys) + L-cysteine + ATP = L-cysteinyl-tRNA(Cys) + AMP + diphosphate. This chain is Cysteine--tRNA ligase, found in Mesoplasma florum (strain ATCC 33453 / NBRC 100688 / NCTC 11704 / L1) (Acholeplasma florum).